Reading from the N-terminus, the 305-residue chain is UDP-3-O-acyl-N-acetylglucosamine deacetylase (305 aa).

His-78, His-237, and Asp-241 together coordinate Zn(2+). The active-site Proton donor is His-264.

This sequence belongs to the LpxC family. Zn(2+) serves as cofactor.

It carries out the reaction a UDP-3-O-[(3R)-3-hydroxyacyl]-N-acetyl-alpha-D-glucosamine + H2O = a UDP-3-O-[(3R)-3-hydroxyacyl]-alpha-D-glucosamine + acetate. The protein operates within glycolipid biosynthesis; lipid IV(A) biosynthesis; lipid IV(A) from (3R)-3-hydroxytetradecanoyl-[acyl-carrier-protein] and UDP-N-acetyl-alpha-D-glucosamine: step 2/6. Catalyzes the hydrolysis of UDP-3-O-myristoyl-N-acetylglucosamine to form UDP-3-O-myristoylglucosamine and acetate, the committed step in lipid A biosynthesis. In Cupriavidus pinatubonensis (strain JMP 134 / LMG 1197) (Cupriavidus necator (strain JMP 134)), this protein is UDP-3-O-acyl-N-acetylglucosamine deacetylase.